Reading from the N-terminus, the 245-residue chain is Triosephosphate isomerase (245 aa).

9–11 (NWK) contacts substrate. H92 acts as the Electrophile in catalysis. E164 functions as the Proton acceptor in the catalytic mechanism. Residues G170, S209, and 230-231 (GG) each bind substrate.

The protein belongs to the triosephosphate isomerase family. In terms of assembly, homodimer.

The protein resides in the cytoplasm. The enzyme catalyses D-glyceraldehyde 3-phosphate = dihydroxyacetone phosphate. It functions in the pathway carbohydrate biosynthesis; gluconeogenesis. It participates in carbohydrate degradation; glycolysis; D-glyceraldehyde 3-phosphate from glycerone phosphate: step 1/1. Its function is as follows. Involved in the gluconeogenesis. Catalyzes stereospecifically the conversion of dihydroxyacetone phosphate (DHAP) to D-glyceraldehyde-3-phosphate (G3P). The chain is Triosephosphate isomerase from Cupriavidus necator (strain ATCC 17699 / DSM 428 / KCTC 22496 / NCIMB 10442 / H16 / Stanier 337) (Ralstonia eutropha).